A 979-amino-acid polypeptide reads, in one-letter code: Probable serine/threonine-protein kinase iksA (979 aa).

10 N-linked (GlcNAc...) asparagine glycosylation sites follow: Asn-32, Asn-110, Asn-120, Asn-121, Asn-147, Asn-155, Asn-161, Asn-220, Asn-231, and Asn-243. Residues 207 to 245 (SKSGVNNNNNNNNNDSTTTNNNNNNNTTPPQQQQQQNSS) form a disordered region. A compositionally biased stretch (low complexity) spans 212-244 (NNNNNNNNNDSTTTNNNNNNNTTPPQQQQQQNS). The Protein kinase domain occupies 261 to 568 (FKEDIKIGSG…ISQILSTHFI (308 aa)). ATP-binding positions include 267–275 (IGSGGFGSV) and Lys-293. The Proton acceptor role is filled by Asp-397. Residues Asn-592, Asn-597, Asn-615, Asn-645, Asn-646, Asn-663, and Asn-699 are each glycosylated (N-linked (GlcNAc...) asparagine). Over residues 593–602 (TSVHNTTAST) the composition is skewed to polar residues. The segment at 593–666 (TSVHNTTAST…LGNNNNNNTN (74 aa)) is disordered. Positions 610-666 (SISTTNSTTSSSSSTATSSSLSSTTIATTSSSNAINNTTATTTTNSNLGNNNNNNTN) are enriched in low complexity. A compositionally biased stretch (acidic residues) spans 713–727 (NDDIIIDDDDDDDDS). Residues 713 to 793 (NDDIIIDDDD…GNNGIRKALP (81 aa)) form a disordered region. Composition is skewed to low complexity over residues 728-737 (TNNNDTNNTD) and 753-773 (NNKKSSYSRSSSIRSPSSSNK). Residues Asn-731 and Asn-734 are each glycosylated (N-linked (GlcNAc...) asparagine). A helical membrane pass occupies residues 846 to 866 (FPSPILLYPLLLLSLIPILVV). N-linked (GlcNAc...) asparagine glycosylation is found at Asn-870 and Asn-894. 2 helical membrane-spanning segments follow: residues 912–932 (INTIISIIRFIYYFVISVLLP) and 956–976 (FPLLSLFKNLTLLIINLIFIF).

Belongs to the protein kinase superfamily. Ser/Thr protein kinase family.

Its subcellular location is the membrane. It carries out the reaction L-seryl-[protein] + ATP = O-phospho-L-seryl-[protein] + ADP + H(+). It catalyses the reaction L-threonyl-[protein] + ATP = O-phospho-L-threonyl-[protein] + ADP + H(+). The chain is Probable serine/threonine-protein kinase iksA (iksA) from Dictyostelium discoideum (Social amoeba).